A 276-amino-acid chain; its full sequence is Undecaprenyl-diphosphatase 2 (276 aa).

Helical transmembrane passes span 1–21 (MSLW…LFPV), 44–64 (QLLP…LWYF), 87–107 (GHLM…GLLL), 114–134 (VFHD…LLWL), 150–170 (LTFK…IPGF), 190–210 (AAEF…LLEL), 222–242 (DALL…RFLM), and 251–271 (LASF…WFMF).

It belongs to the UppP family.

The protein localises to the cell inner membrane. The enzyme catalyses di-trans,octa-cis-undecaprenyl diphosphate + H2O = di-trans,octa-cis-undecaprenyl phosphate + phosphate + H(+). Functionally, catalyzes the dephosphorylation of undecaprenyl diphosphate (UPP). Confers resistance to bacitracin. The sequence is that of Undecaprenyl-diphosphatase 2 from Burkholderia thailandensis (strain ATCC 700388 / DSM 13276 / CCUG 48851 / CIP 106301 / E264).